The following is a 205-amino-acid chain: Probable thymidylate kinase (205 aa).

An ATP-binding site is contributed by 7–14; the sequence is GIDGSGKS.

The protein belongs to the thymidylate kinase family.

It catalyses the reaction dTMP + ATP = dTDP + ADP. This chain is Probable thymidylate kinase, found in Methanoculleus marisnigri (strain ATCC 35101 / DSM 1498 / JR1).